The primary structure comprises 201 residues: Small ribosomal subunit protein uS4c (201 aa).

The region spanning 89-151 is the S4 RNA-binding domain; the sequence is MRLDNILFRL…QKSKTLIQNY (63 aa).

Belongs to the universal ribosomal protein uS4 family. Part of the 30S ribosomal subunit. Contacts protein S5. The interaction surface between S4 and S5 is involved in control of translational fidelity.

Its subcellular location is the plastid. It localises to the chloroplast. Functionally, one of the primary rRNA binding proteins, it binds directly to 16S rRNA where it nucleates assembly of the body of the 30S subunit. With S5 and S12 plays an important role in translational accuracy. The chain is Small ribosomal subunit protein uS4c (rps4) from Phaseolus vulgaris (Kidney bean).